A 333-amino-acid polypeptide reads, in one-letter code: Adenosine deaminase (333 aa).

Residues H12 and H14 each coordinate Zn(2+). Positions 14, 16, and 170 each coordinate substrate. H197 contributes to the Zn(2+) binding site. The active-site Proton donor is E200. D278 serves as a coordination point for Zn(2+). D279 serves as a coordination point for substrate.

This sequence belongs to the metallo-dependent hydrolases superfamily. Adenosine and AMP deaminases family. Adenosine deaminase subfamily. Zn(2+) is required as a cofactor.

It catalyses the reaction adenosine + H2O + H(+) = inosine + NH4(+). The enzyme catalyses 2'-deoxyadenosine + H2O + H(+) = 2'-deoxyinosine + NH4(+). In terms of biological role, catalyzes the hydrolytic deamination of adenosine and 2-deoxyadenosine. The chain is Adenosine deaminase from Salmonella gallinarum (strain 287/91 / NCTC 13346).